Here is a 236-residue protein sequence, read N- to C-terminus: Small ribosomal subunit protein uS2c (236 aa).

Belongs to the universal ribosomal protein uS2 family.

It localises to the plastid. The protein resides in the chloroplast. This chain is Small ribosomal subunit protein uS2c (rps2), found in Citrus sinensis (Sweet orange).